Reading from the N-terminus, the 912-residue chain is DNA ligase 4 (912 aa).

Positions 271, 272, 273, 274, 278, 331, 345, 367, 427, 432, 449, and 451 each coordinate ATP. Lysine 273 serves as the catalytic N6-AMP-lysine intermediate. Glutamate 331 contacts Mg(2+). Glutamate 427 contacts Mg(2+). The interval leucine 610–aspartate 620 is required for catalytic activity. BRCT domains follow at residues lysine 654–methionine 743 and leucine 846–leucine 912.

The protein belongs to the ATP-dependent DNA ligase family. As to quaternary structure, interacts with XRCC4; the LIG4-XRCC4 subcomplex has a 1:2 stoichiometry and XRCC4 is required for LIG4 stability. Component of the core long-range non-homologous end joining (NHEJ) complex (also named DNA-PK complex) composed of PRKDC, LIG4, XRCC4, XRCC6/Ku70, XRCC5/Ku86 and NHEJ1/XLF. Additional component of the NHEJ complex includes PAXX. Following autophosphorylation, PRKDC dissociates from DNA, leading to formation of the short-range NHEJ complex, composed of LIG4, XRCC4, XRCC6/Ku70, XRCC5/Ku86 and NHEJ1/XLF. Interacts with DCLRE1C; the interaction is direct. Interacts with APLF. Mg(2+) serves as cofactor.

Its subcellular location is the nucleus. It catalyses the reaction ATP + (deoxyribonucleotide)n-3'-hydroxyl + 5'-phospho-(deoxyribonucleotide)m = (deoxyribonucleotide)n+m + AMP + diphosphate.. Functionally, DNA ligase involved in DNA non-homologous end joining (NHEJ); required for double-strand break (DSB) repair and V(D)J recombination. Catalyzes the NHEJ ligation step of the broken DNA during DSB repair by resealing the DNA breaks after the gap filling is completed. Joins single-strand breaks in a double-stranded polydeoxynucleotide in an ATP-dependent reaction. LIG4 is mechanistically flexible: it can ligate nicks as well as compatible DNA overhangs alone, while in the presence of XRCC4, it can ligate ends with 2-nucleotides (nt) microhomology and 1-nt gaps. Forms a subcomplex with XRCC4; the LIG4-XRCC4 subcomplex is responsible for the NHEJ ligation step and XRCC4 enhances the joining activity of LIG4. Binding of the LIG4-XRCC4 complex to DNA ends is dependent on the assembly of the DNA-dependent protein kinase complex DNA-PK to these DNA ends. LIG4 regulates nuclear localization of XRCC4. The sequence is that of DNA ligase 4 from Cricetulus griseus (Chinese hamster).